The chain runs to 103 residues: MHVKKGDKVQVISGKDKGKQGVILAAFPKKNRVLVEGVNIVKKHVKPSQANPQGGIINQEAPIHVSNVMPLDPKTGLPTRVGYKVVDGKKVRYAKRSGEILDK.

This sequence belongs to the universal ribosomal protein uL24 family. In terms of assembly, part of the 50S ribosomal subunit.

In terms of biological role, one of two assembly initiator proteins, it binds directly to the 5'-end of the 23S rRNA, where it nucleates assembly of the 50S subunit. Functionally, one of the proteins that surrounds the polypeptide exit tunnel on the outside of the subunit. This is Large ribosomal subunit protein uL24 from Anoxybacillus flavithermus (strain DSM 21510 / WK1).